A 335-amino-acid polypeptide reads, in one-letter code: Protein-arginine kinase (335 aa).

Positions 21-244 (IVMSSRIRLA…NQIIHDEKQI (224 aa)) constitute a Phosphagen kinase C-terminal domain. ATP is bound by residues 24-28 (SSRIR), H82, R115, 166-170 (RASVM), and 197-202 (RGIYGE).

It belongs to the ATP:guanido phosphotransferase family.

It carries out the reaction L-arginyl-[protein] + ATP = N(omega)-phospho-L-arginyl-[protein] + ADP + H(+). In terms of biological role, catalyzes the specific phosphorylation of arginine residues in proteins. In Staphylococcus aureus (strain Mu3 / ATCC 700698), this protein is Protein-arginine kinase.